The following is a 46-amino-acid chain: Protein PsbN (46 aa).

Residues 10 to 30 form a helical membrane-spanning segment; that stretch reads IAITILIVLLGLTAFGVYTAF.

This sequence belongs to the PsbN family.

The protein resides in the cellular thylakoid membrane. In terms of biological role, may play a role in photosystem I and II biogenesis. The protein is Protein PsbN of Prochlorococcus marinus (strain SARG / CCMP1375 / SS120).